The primary structure comprises 84 residues: ATP synthase subunit c (84 aa).

A run of 2 helical transmembrane segments spans residues 8-28 (VAGM…GGGI) and 56-76 (IIGS…AILL).

The protein belongs to the ATPase C chain family. F-type ATPases have 2 components, F(1) - the catalytic core - and F(0) - the membrane proton channel. F(1) has five subunits: alpha(3), beta(3), gamma(1), delta(1), epsilon(1). F(0) has three main subunits: a(1), b(2) and c(10-14). The alpha and beta chains form an alternating ring which encloses part of the gamma chain. F(1) is attached to F(0) by a central stalk formed by the gamma and epsilon chains, while a peripheral stalk is formed by the delta and b chains.

It localises to the cell membrane. Its function is as follows. F(1)F(0) ATP synthase produces ATP from ADP in the presence of a proton or sodium gradient. F-type ATPases consist of two structural domains, F(1) containing the extramembraneous catalytic core and F(0) containing the membrane proton channel, linked together by a central stalk and a peripheral stalk. During catalysis, ATP synthesis in the catalytic domain of F(1) is coupled via a rotary mechanism of the central stalk subunits to proton translocation. Functionally, key component of the F(0) channel; it plays a direct role in translocation across the membrane. A homomeric c-ring of between 10-14 subunits forms the central stalk rotor element with the F(1) delta and epsilon subunits. This chain is ATP synthase subunit c, found in Clostridium novyi (strain NT).